The following is a 207-amino-acid chain: Large ribosomal subunit protein uL4 (207 aa).

This sequence belongs to the universal ribosomal protein uL4 family. In terms of assembly, part of the 50S ribosomal subunit.

One of the primary rRNA binding proteins, this protein initially binds near the 5'-end of the 23S rRNA. It is important during the early stages of 50S assembly. It makes multiple contacts with different domains of the 23S rRNA in the assembled 50S subunit and ribosome. Its function is as follows. Forms part of the polypeptide exit tunnel. This chain is Large ribosomal subunit protein uL4, found in Pelagibacter ubique (strain HTCC1062).